The primary structure comprises 298 residues: Enoyl-CoA hydratase ACTT6 (298 aa).

This sequence belongs to the enoyl-CoA hydratase/isomerase family.

Its pathway is mycotoxin biosynthesis. In terms of biological role, enoyl-CoA hydratase; part of the gene clusters that mediate the biosynthesis of the host-selective toxins (HSTs) ACT-toxins responsible for brown spot of tangerine disease by the tangerine pathotype which affects tangerines and mandarins. ACT-toxins consist of three moieties, 9,10-epoxy-8-hydroxy-9-methyl-decatrienoic acid (EDA), valine and a polyketide. ACT-toxin I is toxic to both citrus and pear; toxin II the 5''-deoxy derivative of ACT-toxin I, is highly toxic to pear and slightly toxic to citrus. On cellular level, ACT-toxins affect plasma membrane of susceptible cells and cause a sudden increase in loss of K(+) after a few minutes of toxin treatment. The acyl-CoA ligase ACTT1, the hydrolase ACTT2, the enoyl-CoA hydratases ACTT3 and ACTT6, and the acyl-CoA synthetase ACTT5 are all involved in the biosynthesis of the AK-, AF- and ACT-toxin common 9,10-epoxy-8-hydroxy-9-methyl-decatrienoic acid (EDA) structural moiety. The exact role of each enzyme, and of additional enzymes identified within the AF-toxin clusters have still to be determined. On the other hand, ACTTS1 to ACTTS4 are specific to the tangerine pathotype. The function of ACTTS3 is to elongate the polyketide chain portion of ACT-toxin that is unique to this toxin. The enoyl-reductase ACTTS2 might complement the missing enoyl-reductase (ER) domain in ACTTS3 in the synthesis of the polyketide portion of ACT-toxin. The roles of the nonribosomal peptide synthetases-related proteins ACTTS1 and ACTTS4 have also still not been elucidated. The protein is Enoyl-CoA hydratase ACTT6 of Alternaria alternata (Alternaria rot fungus).